Here is an 87-residue protein sequence, read N- to C-terminus: Putative membrane protein insertion efficiency factor (87 aa).

This sequence belongs to the UPF0161 family.

Its subcellular location is the cell membrane. Could be involved in insertion of integral membrane proteins into the membrane. In Streptococcus pyogenes serotype M12 (strain MGAS2096), this protein is Putative membrane protein insertion efficiency factor.